A 636-amino-acid chain; its full sequence is MKLSPPKKNLPPQKNNEPPFPYLRLLVQVGIALFLVWIWQESLHKATVSTIPYSEFLNKINQKEIIECKITPDEIYGKMLVSKPEEKGQPPKIALFSTVRVDDPDLVKRLQSAGVVYGSVKPSLLSQILFSWVVPILIFFLVWFALARFMGGGGAGYSLLNIGKSRARLLVDESTGVTFADVAGCDEAKYELQEVVDFLKNPSRYRALGAKIPKGVLLVGPPGTGKTLLAKAVAGEAKVPFFSISGSEFVEMFVGVGAARVRDLFGQAKSKAPCIVFIDELDAIGRQRGVRIQVGSDEHEQTLNQLLVEMDGFDPNEGIIVLAATNRPEILDRALLRPGRFDRQVVVDLPDANGREAILRVHARGKPLSENIDFKEIAQATMGFSGADLANLLNEAALLAARRKSSRIEQVDLLEAMEKVIAGPERKSRVLSEKERERVAYHEVGHALVAFYSEHAEPVRKISIVPRGKSALGYTLQLPTAQKYLLSKSELLDRICVAMGGRAAEELIYGDITTGAENDLEVATTIARQMVCLYGMGEKSGLAHYVPPQPLLGGLDTSYLKECSDETARIIDLEIEKILEENYQRALSILRHHHVELKEVTKYLLQKETLNAEEFKSILENLKEQRKEAPSYSSTL.

Residues 1–18 (MKLSPPKKNLPPQKNNEP) are Cytoplasmic-facing. The chain crosses the membrane as a helical span at residues 19–39 (PFPYLRLLVQVGIALFLVWIW). The Periplasmic portion of the chain corresponds to 40 to 126 (QESLHKATVS…YGSVKPSLLS (87 aa)). The chain crosses the membrane as a helical span at residues 127 to 147 (QILFSWVVPILIFFLVWFALA). The Cytoplasmic portion of the chain corresponds to 148-636 (RFMGGGGAGY…KEAPSYSSTL (489 aa)). ATP is bound at residue 220–227 (GPPGTGKT). Histidine 442 is a binding site for Zn(2+). Glutamate 443 is a catalytic residue. Residues histidine 446 and aspartate 519 each coordinate Zn(2+).

The protein in the central section; belongs to the AAA ATPase family. In the C-terminal section; belongs to the peptidase M41 family. As to quaternary structure, homohexamer. Zn(2+) serves as cofactor.

The protein resides in the cell inner membrane. Acts as a processive, ATP-dependent zinc metallopeptidase for both cytoplasmic and membrane proteins. Plays a role in the quality control of integral membrane proteins. The chain is ATP-dependent zinc metalloprotease FtsH 1 from Methylacidiphilum infernorum (isolate V4) (Methylokorus infernorum (strain V4)).